The chain runs to 1017 residues: Probable isoleucine--tRNA ligase, cytoplasmic (1017 aa).

Positions 45 to 55 (PFATGLPHYGH) match the 'HIGH' region motif. The short motif at 609–613 (KMSKR) is the 'KMSKS' region element. Residue lysine 612 participates in ATP binding.

Belongs to the class-I aminoacyl-tRNA synthetase family.

Its subcellular location is the cytoplasm. The enzyme catalyses tRNA(Ile) + L-isoleucine + ATP = L-isoleucyl-tRNA(Ile) + AMP + diphosphate. In Encephalitozoon cuniculi (strain GB-M1) (Microsporidian parasite), this protein is Probable isoleucine--tRNA ligase, cytoplasmic.